A 632-amino-acid polypeptide reads, in one-letter code: Putative ferric transport system permease protein FbpB 1 (632 aa).

Helical transmembrane passes span 5–25, 37–57, 58–78, 93–113, 144–164, 178–198, 223–243, 270–290, 299–319, 330–350, 377–397, 436–456, 469–489, 490–510, and 547–567; these read SFNL…LPLL, LFLT…YKIS, MGYS…LSLA, LLCI…AIFV, LFLS…FALY, IFSI…VTLM, GFNG…FMIL, YQII…IVFI, PLVL…YIAG, LGSM…IWIG, IIGM…SIFY, IYAG…AYIV, FLTM…YILA, FNNA…SMVM, and CFIV…TSFV. The region spanning 140 to 345 is the ABC transmembrane type-1 1 domain; that stretch reads ITNSLFLSGF…IFSLAIFIIQ (206 aa). An ABC transmembrane type-1 2 domain is found at 431-632; that stretch reads LINTLIYAGI…DCRRYAYFPF (202 aa).

It belongs to the binding-protein-dependent transport system permease family. FbpB subfamily. As to quaternary structure, the complex is composed of two ATP-binding proteins (FbpC), two transmembrane proteins (FbpB) and a solute-binding protein (FbpA).

It is found in the cell inner membrane. Part of the ABC transporter complex FbpABC (TC 3.A.1.10.1) involved in Fe(3+) ions import. Probably responsible for the translocation of the substrate across the membrane. This chain is Putative ferric transport system permease protein FbpB 1 (fbpB1), found in Haemophilus influenzae (strain ATCC 51907 / DSM 11121 / KW20 / Rd).